Reading from the N-terminus, the 543-residue chain is Neurofilament light polypeptide (543 aa).

Ser-2 is modified (N-acetylserine). The tract at residues 2 to 92 is head; it reads SSFSYEPYYS…LKSIRTQEKA (91 aa). Thr-21 carries an O-linked (GlcNAc) threonine glycan. At Arg-23 the chain carries Asymmetric dimethylarginine; alternate. Arg-23 is subject to Omega-N-methylarginine; alternate. Ser-27 is a glycosylation site (O-linked (GlcNAc) serine). Residue Arg-30 is modified to Omega-N-methylarginine. Residue Tyr-43 is modified to Phosphotyrosine. 3 positions are modified to phosphoserine: Ser-56, Ser-67, and Ser-103. One can recognise an IF rod domain in the interval 90–400; the sequence is EKAQLQDLND…KLLEGEETRL (311 aa). Positions 93-124 are coil 1A; sequence QLQDLNDRFASFIERVHELEQQNKVLEAELLV. The tract at residues 125–137 is linker 1; sequence LRQKHSEPSRFRA. Residues 138-234 form a coil 1B region; sequence LYEQEIRDLR…KVHEEEIAEL (97 aa). Residues 235-252 are linker 12; the sequence is QAQIQYAQISVEMDVTKP. The coil 2A stretch occupies residues 253 to 271; the sequence is DLSAALKDIRAQYEKLAAK. Positions 272 to 280 are linker 2; that stretch reads NMQNAEEWF. Residues 281–396 form a coil 2B region; it reads KSRFTVLTES…AAYRKLLEGE (116 aa). Positions 381-391 are epitope; recognized by IF-specific monoclonal antibody; the sequence is ALDIEIAAYRK. Positions 397 to 443 are tail, subdomain A; that stretch reads ETRLSFTSVGSITSGYSQSSQVFGRSAYGGLQTSSYLMSTRSFPSYY. Positions 397–543 are tail; that stretch reads ETRLSFTSVG…GEEQAAKKKD (147 aa). A tail, subdomain B (acidic) region spans residues 444–543; that stretch reads TSHVQEEQIE…GEEQAAKKKD (100 aa). The disordered stretch occupies residues 462-543; sequence KAEEAKDEPP…GEEQAAKKKD (82 aa). Residues 471–525 are compositionally biased toward acidic residues; that stretch reads PSEGEAEEEEKDKEEAEEEEAAEEEEAAKEESEEAKEEEEGGEGEEGEETKEAEE. Phosphoserine is present on residues Ser-472 and Ser-502. The residue at position 520 (Thr-520) is a Phosphothreonine. The span at 526 to 543 shows a compositional bias: basic and acidic residues; it reads EEKKVEGAGEEQAAKKKD.

This sequence belongs to the intermediate filament family. Forms homodimers (in vitro). Forms heterodimers with NEFH or NEFM; which can further hetero-oligomerize (in vitro). Forms heterodimers with INA (in vitro). Interacts with ARHGEF28. Interacts with TRIM2. Post-translationally, O-glycosylated. In terms of processing, phosphorylated in the head and rod regions by the PKC kinase PKN1, leading to the inhibition of polymerization. Ubiquitinated in the presence of TRIM2 and UBE2D1.

The protein localises to the cell projection. It localises to the axon. It is found in the cytoplasm. Its subcellular location is the cytoskeleton. In terms of biological role, neurofilaments usually contain three intermediate filament proteins: NEFL, NEFM, and NEFH which are involved in the maintenance of neuronal caliber. May additionally cooperate with the neuronal intermediate filament proteins PRPH and INA to form neuronal filamentous networks. The sequence is that of Neurofilament light polypeptide (NEFL) from Homo sapiens (Human).